The sequence spans 302 residues: Acetylglutamate kinase (302 aa).

Residues 67–68 (GG), R89, and N194 each bind substrate.

Belongs to the acetylglutamate kinase family. ArgB subfamily.

Its subcellular location is the cytoplasm. The catalysed reaction is N-acetyl-L-glutamate + ATP = N-acetyl-L-glutamyl 5-phosphate + ADP. The protein operates within amino-acid biosynthesis; L-arginine biosynthesis; N(2)-acetyl-L-ornithine from L-glutamate: step 2/4. In terms of biological role, catalyzes the ATP-dependent phosphorylation of N-acetyl-L-glutamate. The polypeptide is Acetylglutamate kinase (Hahella chejuensis (strain KCTC 2396)).